A 110-amino-acid chain; its full sequence is Cytochrome c oxidase subunit 4B (110 aa).

Transmembrane regions (helical) follow at residues 29–49 (MIAF…VGYE), 55–75 (FVVP…LYYF), and 89–109 (FIYG…TVVW).

This sequence belongs to the cytochrome c oxidase bacterial subunit 4 family.

It is found in the cell membrane. The catalysed reaction is 4 Fe(II)-[cytochrome c] + O2 + 8 H(+)(in) = 4 Fe(III)-[cytochrome c] + 2 H2O + 4 H(+)(out). This chain is Cytochrome c oxidase subunit 4B (caaD), found in Bacillus sp. (strain PS3).